Here is a 523-residue protein sequence, read N- to C-terminus: Excitatory amino acid transporter 3 (523 aa).

Residues 1–18 (MGKPTSSGCDWRRFLRNH) are Cytoplasmic-facing. A helical membrane pass occupies residues 19–38 (WLLLSTVAAVVLGIVLGVVV). The Extracellular portion of the chain corresponds to 39–61 (RGHSELSNLDKFYFAFPGEILMR). A helical membrane pass occupies residues 62–82 (MLKLVILPLIVSSMITGVAAL). Residues 83–93 (DSNVSGKIGLR) are Cytoplasmic-facing. Residues 94-114 (AVVYYFSTTVIAVILGIVLVV) traverse the membrane as a helical segment. Residues Tyr-98, Thr-101, and Thr-102 each contribute to the Na(+) site. Over 115–204 (SIKPGVTQKV…KTKEYKIVGL (90 aa)) the chain is Extracellular. N-linked (GlcNAc...) asparagine glycosylation is found at Asn-128, Asn-178, and Asn-194. Residues 205–228 (YSDGINVLGLIIFCLVFGLVIGKM) form a helical membrane-spanning segment. Over 229-237 (GEKGQILVD) the chain is Cytoplasmic. A helical transmembrane segment spans residues 238–265 (FFNALSDATMKIVQIIMCYMPIGILFLI). The Extracellular portion of the chain corresponds to 266-285 (AGKIIEVEDWEIFRKLGLYM). A helical membrane pass occupies residues 286 to 307 (ATVLSGLAIHSLIVLPLLYFIV). At 308 to 312 (VRKNP) the chain is on the cytoplasmic side. Residues 313–343 (FRFALGMAQALLTALMISSSSATLPVTFRCA) constitute an intramembrane region (discontinuously helical). Positions 330 and 332 each coordinate L-aspartate. Residues 344–352 (EEKNQVDKR) are Cytoplasmic-facing. A helical membrane pass occupies residues 353–379 (ITRFVLPVGATINMDGTALYEAVAAVF). Na(+) is bound by residues Gly-361, Thr-363, Asn-365, and Asp-367. Thr-369 contacts L-aspartate. Residues 380 to 392 (IAQLNGLDLSIGQ) lie on the Extracellular side of the membrane. The segment at residues 393–426 (IVTISITATAASIGAAGVPQAGLVTMVIVLSAVG) is an intramembrane region (discontinuously helical). 3 residues coordinate Na(+): Ser-404, Ile-405, and Ala-407. Val-410 serves as a coordination point for L-aspartate. At 427–439 (LPAEDVTLIIAVD) the chain is on the extracellular side. Residues 440-461 (WLLDRFRTMVNVLGDAFGTGIV) form a helical membrane-spanning segment. The L-aspartate site is built by Arg-446, Thr-447, and Asn-450. The Na(+) site is built by Asn-450 and Asp-454. Topologically, residues 462–523 (EKLSKKELEQ…TISFTQTSQF (62 aa)) are cytoplasmic. Phosphoserine is present on residues Ser-516 and Ser-521.

The protein belongs to the dicarboxylate/amino acid:cation symporter (DAACS) (TC 2.A.23) family. SLC1A1 subfamily. In terms of assembly, homotrimer. Interacts with ARL6IP5. Interacts with RTN2 (via N-terminus); the interaction promotes cell surface expression of SLC1A1. Interacts with SORCS2; this interaction is important for normal expression at the cell membrane. In terms of tissue distribution, detected on neurons in the brain cortex, dentate gyrus and hippocampus CA2 region (at protein level). Expressed in whole brain, brain cortex, hippocampus, cerebellum, lung, kidney, small intestine and skeletal muscle. Expressed in the renal outer medulla, medullary ray and cortex (at protein level).

The protein localises to the cell membrane. It is found in the apical cell membrane. It localises to the synapse. Its subcellular location is the synaptosome. The protein resides in the early endosome membrane. The protein localises to the late endosome membrane. It is found in the recycling endosome membrane. The enzyme catalyses K(+)(in) + L-glutamate(out) + 3 Na(+)(out) + H(+)(out) = K(+)(out) + L-glutamate(in) + 3 Na(+)(in) + H(+)(in). It carries out the reaction K(+)(in) + L-aspartate(out) + 3 Na(+)(out) + H(+)(out) = K(+)(out) + L-aspartate(in) + 3 Na(+)(in) + H(+)(in). The catalysed reaction is D-aspartate(out) + K(+)(in) + 3 Na(+)(out) + H(+)(out) = D-aspartate(in) + K(+)(out) + 3 Na(+)(in) + H(+)(in). It catalyses the reaction K(+)(in) + L-cysteine(out) + 3 Na(+)(out) + H(+)(out) = K(+)(out) + L-cysteine(in) + 3 Na(+)(in) + H(+)(in). Its function is as follows. Sodium-dependent, high-affinity amino acid transporter that mediates the uptake of L-glutamate and also L-aspartate and D-aspartate. Can also transport L-cysteine. Functions as a symporter that transports one amino acid molecule together with two or three Na(+) ions and one proton, in parallel with the counter-transport of one K(+) ion. Mediates Cl(-) flux that is not coupled to amino acid transport; this avoids the accumulation of negative charges due to aspartate and Na(+) symport. Plays an important role in L-glutamate and L-aspartate reabsorption in renal tubuli. Plays a redundant role in the rapid removal of released glutamate from the synaptic cleft, which is essential for terminating the postsynaptic action of glutamate. Contributes to glutathione biosynthesis and protection against oxidative stress via its role in L-glutamate and L-cysteine transport. Negatively regulated by ARL6IP5. This Mus musculus (Mouse) protein is Excitatory amino acid transporter 3 (Slc1a1).